The sequence spans 1506 residues: Phosphatidylinositol 3-kinase C2 domain-containing subunit gamma (1506 aa).

The segment at 1–34 (MAYSWQTEPNRTEPQEDGSDTQQFHHTNQHLSSR) is disordered. Positions 20-34 (DTQQFHHTNQHLSSR) are enriched in polar residues. The region spanning 285–371 (DTKFRVKISI…IQLHLQKNRD (87 aa)) is the PI3K-RBD domain. A C2 PI3K-type domain is found at 541–689 (LQSHLSFTVC…SPLTLQIDFP (149 aa)). Residues 704 to 880 (RTDHEEPPRE…QELLAALQFC (177 aa)) enclose the PIK helical domain. The 279-residue stretch at 949–1227 (DRDACSYFTS…KIKESLECFP (279 aa)) folds into the PI3K/PI4K catalytic domain. The interval 955–961 (YFTSNAS) is G-loop. A catalytic loop region spans residues 1091-1099 (GVCDRHNDN). An activation loop region spans residues 1110–1136 (HIDFGKFLGHAQTFGGIKRDRAPFIFT). Residues 1260 to 1372 (LNKTRTIQRV…SFFLSEHIQP (113 aa)) enclose the PX domain. In terms of domain architecture, C2 spans 1381–1506 (DPGENSLDKS…KWYPLGNSII (126 aa)).

It belongs to the PI3/PI4-kinase family. In terms of tissue distribution, expressed predominantly in liver. Also found in kidney, lung and lymphoid tissue. Down-regulated in BeF3 cells expressing the BCR-ABL oncogene p185.

It localises to the membrane. It catalyses the reaction a 1,2-diacyl-sn-glycero-3-phospho-(1D-myo-inositol 4-phosphate) + ATP = a 1,2-diacyl-sn-glycero-3-phospho-(1D-myo-inositol-3,4-bisphosphate) + ADP + H(+). It carries out the reaction a 1,2-diacyl-sn-glycero-3-phospho-(1D-myo-inositol) + ATP = a 1,2-diacyl-sn-glycero-3-phospho-(1D-myo-inositol-3-phosphate) + ADP + H(+). Generates phosphatidylinositol 3-phosphate (PtdIns3P) and phosphatidylinositol 3,4-bisphosphate (PtdIns(3,4)P2) that act as second messengers. May play a role in SDF1A-stimulated chemotaxis. The protein is Phosphatidylinositol 3-kinase C2 domain-containing subunit gamma (Pik3c2g) of Mus musculus (Mouse).